A 300-amino-acid chain; its full sequence is Bifunctional protein FolD 1 (300 aa).

NADP(+) is bound by residues 166–168 (GRS), Ser-191, and Ile-232.

It belongs to the tetrahydrofolate dehydrogenase/cyclohydrolase family. In terms of assembly, homodimer.

It carries out the reaction (6R)-5,10-methylene-5,6,7,8-tetrahydrofolate + NADP(+) = (6R)-5,10-methenyltetrahydrofolate + NADPH. It catalyses the reaction (6R)-5,10-methenyltetrahydrofolate + H2O = (6R)-10-formyltetrahydrofolate + H(+). Its pathway is one-carbon metabolism; tetrahydrofolate interconversion. Functionally, catalyzes the oxidation of 5,10-methylenetetrahydrofolate to 5,10-methenyltetrahydrofolate and then the hydrolysis of 5,10-methenyltetrahydrofolate to 10-formyltetrahydrofolate. The sequence is that of Bifunctional protein FolD 1 from Roseobacter denitrificans (strain ATCC 33942 / OCh 114) (Erythrobacter sp. (strain OCh 114)).